Here is a 314-residue protein sequence, read N- to C-terminus: Methionyl-tRNA formyltransferase (314 aa).

109 to 112 (SLLP) contacts (6S)-5,6,7,8-tetrahydrofolate.

It belongs to the Fmt family.

It catalyses the reaction L-methionyl-tRNA(fMet) + (6R)-10-formyltetrahydrofolate = N-formyl-L-methionyl-tRNA(fMet) + (6S)-5,6,7,8-tetrahydrofolate + H(+). Functionally, attaches a formyl group to the free amino group of methionyl-tRNA(fMet). The formyl group appears to play a dual role in the initiator identity of N-formylmethionyl-tRNA by promoting its recognition by IF2 and preventing the misappropriation of this tRNA by the elongation apparatus. This is Methionyl-tRNA formyltransferase from Syntrophomonas wolfei subsp. wolfei (strain DSM 2245B / Goettingen).